Consider the following 253-residue polypeptide: Imidazole glycerol phosphate synthase subunit HisF (253 aa).

Active-site residues include Asp11 and Asp130.

It belongs to the HisA/HisF family. Heterodimer of HisH and HisF.

It localises to the cytoplasm. It catalyses the reaction 5-[(5-phospho-1-deoxy-D-ribulos-1-ylimino)methylamino]-1-(5-phospho-beta-D-ribosyl)imidazole-4-carboxamide + L-glutamine = D-erythro-1-(imidazol-4-yl)glycerol 3-phosphate + 5-amino-1-(5-phospho-beta-D-ribosyl)imidazole-4-carboxamide + L-glutamate + H(+). It functions in the pathway amino-acid biosynthesis; L-histidine biosynthesis; L-histidine from 5-phospho-alpha-D-ribose 1-diphosphate: step 5/9. In terms of biological role, IGPS catalyzes the conversion of PRFAR and glutamine to IGP, AICAR and glutamate. The HisF subunit catalyzes the cyclization activity that produces IGP and AICAR from PRFAR using the ammonia provided by the HisH subunit. In Thermotoga sp. (strain RQ2), this protein is Imidazole glycerol phosphate synthase subunit HisF.